Here is a 564-residue protein sequence, read N- to C-terminus: M protein, serotype 12 (564 aa).

An N-terminal signal peptide occupies residues 1-41 (MAKNTTNRHYSLRKLKTGTASVAVALTVVGAGLVAGQTVRA). The stretch at 44-505 (SDLVAEKQRL…RAGKASDSQT (462 aa)) forms a coiled coil. C repeat units follow at residues 285–319 (KQLE…EAEL), 327–361 (AKVT…VEAA), 363–397 (KQLE…EKDL), and 405–439 (DKVK…EKAL). Disordered regions lie at residues 372-391 (SEAS…EAKK) and 404-438 (LDKV…VEKA). 2 stretches are compositionally biased toward basic and acidic residues: residues 404-413 (LDKVKEEKQI) and 421-438 (LRRD…VEKA). D repeat units follow at residues 472–477 (AKLEAE), 478–483 (AKALKE), 486–491 (AKQAEE), and 493–498 (AKLRAG). Positions 493-550 (AKLRAGKASDSQTPDAKPGNKAVPGKGQAPQAGTKPNQNKAPMKETKRQLPSTGETAN) are disordered. Positions 542–546 (LPSTG) match the LPXTG sorting signal motif. Thr545 is subject to Pentaglycyl murein peptidoglycan amidated threonine. Residues 546 to 564 (GETANPFFTAAALTVMAAA) constitute a propeptide, removed by sortase.

Belongs to the M protein family.

It is found in the secreted. The protein resides in the cell wall. This protein is one of the different antigenic serotypes of protein M. Protein M is closely associated with virulence of the bacterium and can render the organism resistant to phagocytosis. The polypeptide is M protein, serotype 12 (emm12) (Streptococcus pyogenes).